We begin with the raw amino-acid sequence, 179 residues long: Peptide deformylase (179 aa).

2 residues coordinate Fe cation: cysteine 102 and histidine 144. Glutamate 145 is a catalytic residue. Residue histidine 148 coordinates Fe cation.

The protein belongs to the polypeptide deformylase family. Fe(2+) is required as a cofactor.

The enzyme catalyses N-terminal N-formyl-L-methionyl-[peptide] + H2O = N-terminal L-methionyl-[peptide] + formate. Functionally, removes the formyl group from the N-terminal Met of newly synthesized proteins. Requires at least a dipeptide for an efficient rate of reaction. N-terminal L-methionine is a prerequisite for activity but the enzyme has broad specificity at other positions. The sequence is that of Peptide deformylase from Wolbachia sp. subsp. Drosophila simulans (strain wRi).